A 634-amino-acid chain; its full sequence is 1,4-alpha-glucan branching enzyme GlgB (634 aa).

The active-site Nucleophile is the aspartate 305. Glutamate 357 functions as the Proton donor in the catalytic mechanism.

Belongs to the glycosyl hydrolase 13 family. GlgB subfamily. In terms of assembly, monomer.

The enzyme catalyses Transfers a segment of a (1-&gt;4)-alpha-D-glucan chain to a primary hydroxy group in a similar glucan chain.. Its pathway is glycan biosynthesis; glycogen biosynthesis. Its function is as follows. Catalyzes the formation of the alpha-1,6-glucosidic linkages in glycogen by scission of a 1,4-alpha-linked oligosaccharide from growing alpha-1,4-glucan chains and the subsequent attachment of the oligosaccharide to the alpha-1,6 position. The chain is 1,4-alpha-glucan branching enzyme GlgB from Lactiplantibacillus plantarum (strain ATCC BAA-793 / NCIMB 8826 / WCFS1) (Lactobacillus plantarum).